We begin with the raw amino-acid sequence, 753 residues long: MSKNSEFINLSFLLDHEKEMILGVLKRDEYLKKVEDKRIRKLKNELLEAKRRSGKTHQEANRVCVHCQKSLGLIFDRGAPCQACSLRVCSECRVTGLDGSWKCTVCAKVAQLRIISGEWFLEEKAKRFKQVNVLGTDVVRQSILRRSPGSEEIQNQEQAHQGADKSDTLSSVRQKATHDGPKRKGFLLSKFRSATRGEIKTPKAESGRSYSLDLDNQNLQSFKSVSGSDRGSTTSSDLTDQEAGRGAPKGSCSNGGIPVTQRSPAPSARSVTSISSREHGFENSMALATIESISEELTKSHRRNTSGTPSIAVSGTSLSSERSRSELDLSESFAEDLEDTSSIRSRSVPGALDKDLNSLEDTEDGVDLVSSRFSANTHSLASGLSTSSQAGSDRKRSYLHVPDADSDTTSLNSMMSVYSETGDYGNVKVTGEILLHISYCYKTGGLYIFVKNCRNLAIGDEKKQRTDAYVKSYLLPDKTRNNKRKTKIRTGTNPEFNETLKYTISHTQLETRTLQLSVWHYDRFGRNSFLGEVEIAFDSWNFENPCDEWFVLQPKVELAPDISLQYKGELTIVLRYIPPEENLIFPVEQPQGKKIFKKGKKKESPAISGGILEVFIKEAKNLTAVKAGGTSDSFVKGYLLPDDNKATKHKTAVVKKSVNPQWNHVFIFSGLYPQDIQNACLELTIWDKEAFSSNIFLGGVRLNSGSGISHGKAVDWMDSRGEEQRLWQKMADNPGTSVEGVLMLRSSMAKCRL.

Residues 7–123 (FINLSFLLDH…IISGEWFLEE (117 aa)) form the RabBD domain. Residues 64–106 (CVHCQKSLGLIFDRGAPCQACSLRVCSECRVTGLDGSWKCTVC) form an FYVE-type zinc finger. Disordered stretches follow at residues 145-188 (RRSP…GFLL), 221-283 (SFKS…GFEN), and 298-359 (TKSH…LNSL). At Ser-147 the chain carries Phosphoserine. A compositionally biased stretch (low complexity) spans 224–238 (SVSGSDRGSTTSSDL). Composition is skewed to polar residues over residues 260-275 (TQRS…TSIS) and 305-316 (TSGTPSIAVSGT). 2 consecutive C2 domains span residues 429-550 (VTGE…DEWF) and 590-717 (PQGK…VDWM).

Binds RAB27A that has been activated by GTP-binding.

The protein localises to the membrane. Its function is as follows. May act as Rab effector protein and play a role in vesicle trafficking. Binds phospholipids. The chain is Synaptotagmin-like protein 5 (Sytl5) from Rattus norvegicus (Rat).